The chain runs to 435 residues: Membrane-bound ghrelin O-acyltransferase MBOAT4 (435 aa).

Topologically, residues 1-5 (MDWLQ) are lumenal. Residues 6–26 (LFFLHPLSFYQGAAFPFALLF) form a helical membrane-spanning segment. Residues 27–40 (NYLCILDTFSTRAR) are Cytoplasmic-facing. Residues 41–56 (YLFLLAGGGVLAFAAM) traverse the membrane as a helical segment. Residues 57–59 (GPY) lie on the Lumenal side of the membrane. Residues 60–76 (SLLIFIPALCAVALVSF) traverse the membrane as a helical segment. At 77-82 (LSPQEV) the chain is on the cytoplasmic side. The chain crosses the membrane as a helical span at residues 83 to 101 (HRLTFFFQMGWQTLCHLGL). Over 102–120 (HYTEYYLGEPPPVRFYITL) the chain is Lumenal. A helical membrane pass occupies residues 121–136 (SSLMLLTQRVTSLSLD). The Cytoplasmic portion of the chain corresponds to 137–206 (ICEGKVEAPR…YPSISFRALT (70 aa)). The chain crosses the membrane as a helical span at residues 207 to 227 (WRGLQILGLECLKVALRSAVS). Residues 228 to 240 (AGAGLDDCQRLEC) are Lumenal-facing. Residues 241-261 (IYLMWSTAWLFKLTYYSHWIL) form a helical membrane-spanning segment. Over 262-324 (DDSLLHAAGF…RRLVFRKSRR (63 aa)) the chain is Cytoplasmic. Active-site residues include N307 and H338. A helical transmembrane segment spans residues 325-338 (WPLLQTFAFSAWWH). Residues 339–340 (GL) lie on the Lumenal side of the membrane. The helical transmembrane segment at 341-357 (HPGQVFGFLCWSVMVKA) threads the bilayer. Over 358-376 (DYLIHTFANVCIRSWPLRL) the chain is Cytoplasmic. Residues 377–397 (LYRALTWAHTQLIIAYIMLAV) form a helical membrane-spanning segment. Residues 398-407 (EGRSLSSLCQ) are Lumenal-facing. The helical transmembrane segment at 408–428 (LCCSYNSLFPVMYGLLLFLLA) threads the bilayer. Residues 429–435 (ERKDKRN) lie on the Cytoplasmic side of the membrane.

Belongs to the membrane-bound acyltransferase family. Monomer. In terms of processing, not glycosylated. As to expression, highly expressed in stomach and pancreas. Lower expression in small intestine and colon. Very low expression in testis.

It localises to the endoplasmic reticulum membrane. It carries out the reaction octanoyl-CoA + L-seryl-[protein] = O-octanoyl-L-seryl-[protein] + CoA. The catalysed reaction is hexanoyl-CoA + L-seryl-[protein] = O-hexanoyl-L-seryl-[protein] + CoA. The enzyme catalyses decanoyl-CoA + L-seryl-[protein] = O-decanoyl-L-seryl-[protein] + CoA. It catalyses the reaction L-seryl-[protein] + acetyl-CoA = O-acetyl-L-seryl-[protein] + CoA. It carries out the reaction L-seryl-[protein] + butanoyl-CoA = O-butanoyl-L-seryl-[protein] + CoA. The catalysed reaction is pentanoyl-CoA + L-seryl-[protein] = O-pentanoyl-L-seryl-[protein] + CoA. The enzyme catalyses heptanoyl-CoA + L-seryl-[protein] = O-heptanoyl-L-seryl-[protein] + CoA. It catalyses the reaction nonanoyl-CoA + L-seryl-[protein] = O-nonanoyl-L-seryl-[protein] + CoA. It carries out the reaction L-seryl-[protein] + dodecanoyl-CoA = O-dodecanoyl-L-seryl-[protein] + CoA. The catalysed reaction is L-seryl-[protein] + tetradecanoyl-CoA = O-tetradecanoyl-L-seryl-[protein] + CoA. The enzyme catalyses a fatty acyl-CoA + L-seryl-[protein] = O-fatty acyl-L-seryl-[protein] + CoA. With respect to regulation, inhibited by 1-[2-cyano-3,12-dioxooleana-1,9(11)- dien-28-oyl]ethylamide (CDDO-EA) with an IC(50) of 60 uM. Inhibited by Fe3+ and Cu2+ and the O-acyltransferase activity is completely blocked over 5 mM Fe3+ and 0.5 mM Cu2+. In terms of biological role, catalyzes ghrelin acylation at 'Ser-3' using preferentially octanoyl-CoA, hexanoyl-CoA and decanoyl-CoA as acyl-CoA donors leading to ghrelin activity. In vitro also uses acyl-CoA donors of different lengths from short-chain (C2) to long-chain fatty acids (C16) knowing that acyl-CoA donors from butanoyl-CoA (C4) to dodecanoyl-CoA (C12) are more efficient compared to longer acyl-CoA donors, such as myristoyl-CoA (C14) and palmitoyl-CoA (C16) that are not efficient. Inactive octanoyltransferase activity. This is Membrane-bound ghrelin O-acyltransferase MBOAT4 from Mus musculus (Mouse).